The chain runs to 298 residues: Protein FAM221A (298 aa).

Polar residues predominate over residues 241-257 (SSPETLTDVGTSSQVSS). Positions 241–263 (SSPETLTDVGTSSQVSSLRRPEE) are disordered.

This sequence belongs to the FAM221 family.

In Homo sapiens (Human), this protein is Protein FAM221A (FAM221A).